The chain runs to 126 residues: Protein chibby homolog 1 (126 aa).

Over residues 1-10 the composition is skewed to polar residues; sequence MPFFGNTFSP. Residues 1–26 are disordered; the sequence is MPFFGNTFSPKKTPPRKSASLSNLHS. S9 and S20 each carry phosphoserine. Positions 60–112 are minimal region for the interaction with PKD2; the sequence is IAETGVSGGVDRREVQRLRRRNQQLEEENNLLRLKVDILLDMLSESTAESHLM. Residues 67-125 adopt a coiled-coil conformation; it reads GGVDRREVQRLRRRNQQLEEENNLLRLKVDILLDMLSESTAESHLMEKELDELRISRKR. A leucine-zipper; mediates homodimerization region spans residues 77–98; that stretch reads LRRRNQQLEEENNLLRLKVDIL.

This sequence belongs to the chibby family. Homodimer. Homodimerization is essential for nuclear localization and interaction with KPNA4 but is dispensable for interaction with CTNNB1. Interacts with polycystin-2/PKD2 and GM130. Interacts with the C-terminal region of CTNNB1. Interacts (C-terminus) with TCIM (C-terminus), TCIM competes with CTNNB1 for the interaction with CBY1. Interacts with FAM92A; this interaction facilitates targeting of FAM92A to cilium basal body. Interacts with CIBAR2. Interacts with KPNA4. Widely expressed. Expressed at higher levels in heart, skeletal muscle, kidney and placenta. Also found in brain, lung, liver and testis. Significantly down-regulated in thyroid and metastatic uterine tumors.

Its subcellular location is the nucleus speckle. The protein localises to the cytoplasm. It is found in the cytoskeleton. It localises to the cilium basal body. The protein resides in the microtubule organizing center. Its subcellular location is the centrosome. The protein localises to the centriole. It is found in the golgi apparatus. It localises to the trans-Golgi network. The protein resides in the cell projection. Its subcellular location is the cilium. The protein localises to the flagellum. It is found in the nucleus. Inhibits the Wnt/Wingless pathway by binding to CTNNB1/beta-catenin and inhibiting beta-catenin-mediated transcriptional activation through competition with TCF/LEF transcription factors. Has also been shown to play a role in regulating the intracellular trafficking of polycystin-2/PKD2 and possibly of other intracellular proteins. Promotes adipocyte and cardiomyocyte differentiation. This is Protein chibby homolog 1 (CBY1) from Homo sapiens (Human).